The sequence spans 237 residues: Uridylate kinase (237 aa).

Position 11–14 (11–14 (KLSG)) interacts with ATP. A UMP-binding site is contributed by Gly53. Gly54 and Arg58 together coordinate ATP. UMP contacts are provided by residues Asp73 and 134 to 141 (TGNPFFTT). ATP contacts are provided by Thr161, Tyr167, and Asp170.

It belongs to the UMP kinase family. Homohexamer.

Its subcellular location is the cytoplasm. It carries out the reaction UMP + ATP = UDP + ADP. It functions in the pathway pyrimidine metabolism; CTP biosynthesis via de novo pathway; UDP from UMP (UMPK route): step 1/1. With respect to regulation, inhibited by UTP. Its function is as follows. Catalyzes the reversible phosphorylation of UMP to UDP. The chain is Uridylate kinase from Burkholderia cenocepacia (strain HI2424).